Consider the following 486-residue polypeptide: Ribulose bisphosphate carboxylase large chain (486 aa).

Residues Asn125 and Thr175 each coordinate substrate. Lys177 serves as the catalytic Proton acceptor. Substrate is bound at residue Lys179. Mg(2+)-binding residues include Lys203, Asp205, and Glu206. Lys203 bears the N6-carboxylysine mark. His295 functions as the Proton acceptor in the catalytic mechanism. 3 residues coordinate substrate: Arg296, His328, and Ser380.

The protein belongs to the RuBisCO large chain family. Type I subfamily. As to quaternary structure, heterohexadecamer of 8 large chains and 8 small chains. Mg(2+) serves as cofactor.

It catalyses the reaction 2 (2R)-3-phosphoglycerate + 2 H(+) = D-ribulose 1,5-bisphosphate + CO2 + H2O. The catalysed reaction is D-ribulose 1,5-bisphosphate + O2 = 2-phosphoglycolate + (2R)-3-phosphoglycerate + 2 H(+). In terms of biological role, ruBisCO catalyzes two reactions: the carboxylation of D-ribulose 1,5-bisphosphate, the primary event in carbon dioxide fixation, as well as the oxidative fragmentation of the pentose substrate. Both reactions occur simultaneously and in competition at the same active site. The chain is Ribulose bisphosphate carboxylase large chain from Afipia carboxidovorans (strain ATCC 49405 / DSM 1227 / KCTC 32145 / OM5) (Oligotropha carboxidovorans).